The chain runs to 370 residues: sn-glycerol-3-phosphate import ATP-binding protein UgpC (370 aa).

The 232-residue stretch at 4–235 folds into the ABC transporter domain; it reads LRLDGIRKRY…PATRFVASFL (232 aa). 37 to 44 provides a ligand contact to ATP; that stretch reads GPSGCGKS.

It belongs to the ABC transporter superfamily. sn-glycerol-3-phosphate importer (TC 3.A.1.1.3) family. As to quaternary structure, the complex is composed of two ATP-binding proteins (UgpC), two transmembrane proteins (UgpA and UgpE) and a solute-binding protein (UgpB).

The protein localises to the cell inner membrane. It carries out the reaction sn-glycerol 3-phosphate(out) + ATP + H2O = sn-glycerol 3-phosphate(in) + ADP + phosphate + H(+). In terms of biological role, part of the ABC transporter complex UgpBAEC involved in sn-glycerol-3-phosphate (G3P) import. Responsible for energy coupling to the transport system. In Chromohalobacter salexigens (strain ATCC BAA-138 / DSM 3043 / CIP 106854 / NCIMB 13768 / 1H11), this protein is sn-glycerol-3-phosphate import ATP-binding protein UgpC.